The primary structure comprises 271 residues: Tryptophan synthase alpha chain (271 aa).

Active-site proton acceptor residues include glutamate 49 and aspartate 60.

Belongs to the TrpA family. In terms of assembly, tetramer of two alpha and two beta chains.

The catalysed reaction is (1S,2R)-1-C-(indol-3-yl)glycerol 3-phosphate + L-serine = D-glyceraldehyde 3-phosphate + L-tryptophan + H2O. It functions in the pathway amino-acid biosynthesis; L-tryptophan biosynthesis; L-tryptophan from chorismate: step 5/5. Functionally, the alpha subunit is responsible for the aldol cleavage of indoleglycerol phosphate to indole and glyceraldehyde 3-phosphate. This chain is Tryptophan synthase alpha chain, found in Rhizorhabdus wittichii (strain DSM 6014 / CCUG 31198 / JCM 15750 / NBRC 105917 / EY 4224 / RW1) (Sphingomonas wittichii).